Here is a 298-residue protein sequence, read N- to C-terminus: MMSIPVNPTNASIQPQSLYDAWADLAWRAMLTEVNLSPKPGLVDRLNCGAHKDMALEDFHRSAEAIRDWLPRFMEYGASCTRLPPESVLAGLRPLGMACEAAMFRATAGVNTHKGSIFSLGLLCAAIGRLYQLRQPITAQTLCATSAAFCRGLTARELRQNNLQLTAGQRLYQQLGLTGARGEAEAGYPLVIRHALPHYRALLAQGRDPELALLDTLLLLMSLNGDTNVASRGGSDGLRWLQQHASFLLRQGGIRTPDDLVYLHQFNQQCIERNLSPGGSADLLIVTWFLAQISQVNH.

The protein belongs to the CitG/MdcB family.

It carries out the reaction 3'-dephospho-CoA + ATP = 2'-(5''-triphospho-alpha-D-ribosyl)-3'-dephospho-CoA + adenine. The sequence is that of Probable 2-(5''-triphosphoribosyl)-3'-dephosphocoenzyme-A synthase from Salmonella arizonae (strain ATCC BAA-731 / CDC346-86 / RSK2980).